A 261-amino-acid polypeptide reads, in one-letter code: Protein FAM216A (261 aa).

The tract at residues 1-52 (MPSRCPGVAGPPALARTEGSEGSAGQSYHQNSKGTGEQHKAERIKEGHRMSS) is disordered. Over residues 23–35 (SAGQSYHQNSKGT) the composition is skewed to polar residues. The segment covering 36–49 (GEQHKAERIKEGHR) has biased composition (basic and acidic residues).

The protein belongs to the FAM216 family.

This chain is Protein FAM216A (Fam216a), found in Rattus norvegicus (Rat).